Here is a 327-residue protein sequence, read N- to C-terminus: Ferrochelatase (327 aa).

Fe cation-binding residues include His-196 and Glu-277.

Belongs to the ferrochelatase family.

The protein resides in the cytoplasm. The enzyme catalyses heme b + 2 H(+) = protoporphyrin IX + Fe(2+). Its pathway is porphyrin-containing compound metabolism; protoheme biosynthesis; protoheme from protoporphyrin-IX: step 1/1. In terms of biological role, catalyzes the ferrous insertion into protoporphyrin IX. This chain is Ferrochelatase, found in Gloeobacter violaceus (strain ATCC 29082 / PCC 7421).